The chain runs to 269 residues: 4-chlorobenzoyl coenzyme A dehalogenase (269 aa).

Substrate is bound by residues R24 and 62–67 (AGFYLR). The active-site Proton acceptor is the H90. G114 is a substrate binding site. The Nucleophile role is filled by D145. Position 257 (R257) interacts with substrate.

It belongs to the enoyl-CoA hydratase/isomerase family. In terms of assembly, homotetramer. Homotetramer, homooctamer and larger multimers. Homotrimer.

The catalysed reaction is 4-chlorobenzoyl-CoA + H2O = 4-hydroxybenzoyl-CoA + chloride + H(+). It participates in xenobiotic degradation; 4-chlorobenzoate degradation; 4-hydroxybenzoate from 4-chlorobenzoate: step 2/3. Its activity is regulated as follows. Inactivated by 1 mM Ag(+) and by 5 mM Cu(2+). Partially inhibited by 5 mM Zn(2+), Mn(2+), Co(2+), Fe(2+) and Ni(2+). Unaffected by 10 mM Na(+), K(+) and Li(+) and by 0.5 mM Mg(2+), Mn(2+), Fe(2+), Ca(2+), Co(2+) and Zn(2+). Inhibited by the sulfhydryl blocking agent 5,5'-dithio-bis-(2-nitrobenzoate), SDS and N-bromosuccinimide. Unaffected by sodium azide and EDTA. Inactivated following treatment with diethyl pyrocarbonate; this inactivation is reversible by treatment with hydroxylamine. Functionally, dehalogenates 4-chlorobenzoyl-CoA, 4-iodobenzoyl-CoA and 4-bromobenzoyl-CoA, but not 4-fluorobenzoyl-CoA. Inactive towards crotonyl-CoA, alpha-methylcrotonyl-CoA and beta-methylcrotonyl-CoA. The polypeptide is 4-chlorobenzoyl coenzyme A dehalogenase (Pseudomonas sp. (strain CBS-3)).